A 483-amino-acid chain; its full sequence is Zinc metalloproteinase/disintegrin (483 aa).

The first 20 residues, methionine 1–serine 20, serve as a signal peptide directing secretion. Residues isoleucine 21–glutamate 191 constitute a propeptide that is removed on maturation. Residues arginine 198–proline 394 form the Peptidase M12B domain. 2 residues coordinate Ca(2+): glutamate 201 and aspartate 285. 3 disulfides stabilise this stretch: cysteine 309–cysteine 389, cysteine 349–cysteine 373, and cysteine 351–cysteine 356. Residue histidine 334 participates in Zn(2+) binding. Residue glutamate 335 is part of the active site. 2 residues coordinate Zn(2+): histidine 338 and histidine 344. Ca(2+) is bound by residues cysteine 389 and asparagine 392. The propeptide occupies leucine 395 to glutamate 414. The region spanning threonine 402 to alanine 483 is the Disintegrin domain. 4 disulfide bridges follow: cysteine 425–cysteine 448, cysteine 439–cysteine 445, cysteine 444–cysteine 469, and cysteine 457–cysteine 476. Positions lysine 461 to aspartate 463 match the Cell attachment site; atypical (KGD) motif.

The protein belongs to the venom metalloproteinase (M12B) family. P-II subfamily. P-IIe sub-subfamily. In terms of assembly, heterodimer with piscivostatin-alpha; disulfide-linked (disintegrin). Requires Zn(2+) as cofactor. As to expression, expressed by the venom gland.

It localises to the secreted. Functionally, impairs hemostasis in the envenomed animal. Its function is as follows. Inhibits platelet aggregation induced by ADP. Acts by inhibiting fibrinogen interaction with platelet receptors GPIIb/GPIIIa (ITGA2B/ITGB3). Also inhibits platelet aggregate dissociation in human platelet-rich plasma. In Agkistrodon piscivorus piscivorus (Eastern cottonmouth), this protein is Zinc metalloproteinase/disintegrin.